Here is a 258-residue protein sequence, read N- to C-terminus: Small ribosomal subunit protein uS2 (258 aa).

Positions 226–258 are disordered; sequence QGVSNEEVAAEQNIDLDEKEKSEETEATEATEE.

The protein belongs to the universal ribosomal protein uS2 family.

In Staphylococcus aureus (strain COL), this protein is Small ribosomal subunit protein uS2.